The following is a 97-amino-acid chain: Stefin-1 (97 aa).

A Secondary area of contact motif is present at residues 46 to 50 (QVVAG).

It belongs to the cystatin family.

It localises to the cytoplasm. Functionally, this is an intracellular thiol proteinase inhibitor. This is Stefin-1 (Stfa1) from Mus musculus (Mouse).